We begin with the raw amino-acid sequence, 250 residues long: Small ribosomal subunit protein uS2 (250 aa).

A disordered region spans residues aspartate 226–alanine 250. Residues alanine 239 to alanine 250 show a composition bias toward low complexity.

Belongs to the universal ribosomal protein uS2 family.

The protein is Small ribosomal subunit protein uS2 (rpsB) of Zymomonas mobilis subsp. mobilis (strain ATCC 31821 / ZM4 / CP4).